Consider the following 138-residue polypeptide: Large ribosomal subunit protein uL16 (138 aa).

Basic residues predominate over residues methionine 1–glycine 19. The segment at methionine 1–glycine 24 is disordered.

Belongs to the universal ribosomal protein uL16 family. In terms of assembly, part of the 50S ribosomal subunit.

Binds 23S rRNA and is also seen to make contacts with the A and possibly P site tRNAs. The protein is Large ribosomal subunit protein uL16 of Micrococcus luteus (strain ATCC 4698 / DSM 20030 / JCM 1464 / CCM 169 / CCUG 5858 / IAM 1056 / NBRC 3333 / NCIMB 9278 / NCTC 2665 / VKM Ac-2230) (Micrococcus lysodeikticus).